The sequence spans 340 residues: Glutaminase 2 (340 aa).

The substrate site is built by S89, N140, N191, Y215, and Y267.

It belongs to the glutaminase family. In terms of assembly, homotetramer.

It carries out the reaction L-glutamine + H2O = L-glutamate + NH4(+). In Yersinia pestis, this protein is Glutaminase 2.